We begin with the raw amino-acid sequence, 336 residues long: 25S rRNA (uridine(2634)-N(3))-methyltransferase (336 aa).

Positions Pro-286–Asp-307 are disordered. Residues Thr-293–Asp-307 are compositionally biased toward basic and acidic residues.

This sequence belongs to the class I-like SAM-binding methyltransferase superfamily. BMT5 family.

The protein resides in the nucleus. It is found in the nucleolus. It catalyses the reaction uridine(2634) in 25S rRNA + S-adenosyl-L-methionine = N(3)-methyluridine(2634) in 25S rRNA + S-adenosyl-L-homocysteine + H(+). S-adenosyl-L-methionine-dependent methyltransferase that specifically methylates the N(3) position of uridine 2634 (m3U2634) in 25S rRNA. This is 25S rRNA (uridine(2634)-N(3))-methyltransferase (BMT5) from Saccharomyces cerevisiae (strain ATCC 204508 / S288c) (Baker's yeast).